The primary structure comprises 514 residues: tRNA-2-methylthio-N(6)-dimethylallyladenosine synthase (514 aa).

The MTTase N-terminal domain maps to 68–186 (RTFLIKTYGC…LPEILEEAYL (119 aa)). Residues C77, C113, C147, C223, C227, and C230 each coordinate [4Fe-4S] cluster. A Radical SAM core domain is found at 209-439 (REGSTKAWVN…NKKVGHYSEK (231 aa)). The TRAM domain maps to 442-505 (NQYEGKTVTV…QYSLNGTFKE (64 aa)).

This sequence belongs to the methylthiotransferase family. MiaB subfamily. Monomer. [4Fe-4S] cluster is required as a cofactor.

It localises to the cytoplasm. The enzyme catalyses N(6)-dimethylallyladenosine(37) in tRNA + (sulfur carrier)-SH + AH2 + 2 S-adenosyl-L-methionine = 2-methylsulfanyl-N(6)-dimethylallyladenosine(37) in tRNA + (sulfur carrier)-H + 5'-deoxyadenosine + L-methionine + A + S-adenosyl-L-homocysteine + 2 H(+). Its function is as follows. Catalyzes the methylthiolation of N6-(dimethylallyl)adenosine (i(6)A), leading to the formation of 2-methylthio-N6-(dimethylallyl)adenosine (ms(2)i(6)A) at position 37 in tRNAs that read codons beginning with uridine. This is tRNA-2-methylthio-N(6)-dimethylallyladenosine synthase from Staphylococcus haemolyticus (strain JCSC1435).